Reading from the N-terminus, the 365-residue chain is 3-isopropylmalate dehydrogenase (365 aa).

G80–E91 provides a ligand contact to NAD(+). Positions 98, 108, 137, and 226 each coordinate substrate. Mg(2+) contacts are provided by D226, D251, and D255. G290–N301 is an NAD(+) binding site.

This sequence belongs to the isocitrate and isopropylmalate dehydrogenases family. Homodimer. Mg(2+) serves as cofactor. The cofactor is Mn(2+).

The protein localises to the cytoplasm. The enzyme catalyses (2R,3S)-3-isopropylmalate + NAD(+) = 4-methyl-2-oxopentanoate + CO2 + NADH. It functions in the pathway amino-acid biosynthesis; L-leucine biosynthesis; L-leucine from 3-methyl-2-oxobutanoate: step 3/4. Catalyzes the oxidation of 3-carboxy-2-hydroxy-4-methylpentanoate (3-isopropylmalate) to 3-carboxy-4-methyl-2-oxopentanoate. The product decarboxylates to 4-methyl-2 oxopentanoate. This Maudiozyma exigua (Yeast) protein is 3-isopropylmalate dehydrogenase (LEU2).